A 400-amino-acid chain; its full sequence is Lysophospholipid transporter LplT (400 aa).

12 helical membrane passes run 19–39, 53–73, 91–111, 139–159, 164–184, 195–213, 227–247, 257–277, 281–301, 304–324, 352–372, and 373–393; these read VIVA…ATLA, VLQM…GQIA, AGAA…LVGI, LMEA…GVLA, IAAL…NLFI, SWRL…VVLW, LFWG…PVAL, YLNA…AKLV, TVSR…IFSL, ALLP…FFVV, NSAM…GVPA, and VAIG…LWIW.

It belongs to the major facilitator superfamily. LplT (TC 2.A.1.42) family.

The protein resides in the cell inner membrane. Its function is as follows. Catalyzes the facilitated diffusion of 2-acyl-glycero-3-phosphoethanolamine (2-acyl-GPE) into the cell. The polypeptide is Lysophospholipid transporter LplT (Salmonella newport (strain SL254)).